The chain runs to 546 residues: Methionine--tRNA ligase (546 aa).

The 'HIGH' region motif lies at 15–25 (PYANGPIHLGH). Zn(2+) contacts are provided by Cys-146, Cys-149, Cys-159, and Cys-162. The short motif at 332–336 (KMSKS) is the 'KMSKS' region element. Lys-335 is an ATP binding site.

Belongs to the class-I aminoacyl-tRNA synthetase family. MetG type 1 subfamily. As to quaternary structure, monomer. Zn(2+) is required as a cofactor.

It localises to the cytoplasm. The catalysed reaction is tRNA(Met) + L-methionine + ATP = L-methionyl-tRNA(Met) + AMP + diphosphate. Its function is as follows. Is required not only for elongation of protein synthesis but also for the initiation of all mRNA translation through initiator tRNA(fMet) aminoacylation. The protein is Methionine--tRNA ligase of Coxiella burnetii (strain Dugway 5J108-111).